We begin with the raw amino-acid sequence, 233 residues long: Homeobox protein ceh-30 (233 aa).

A compositionally biased stretch (polar residues) spans 50-85 (NNSTYSHDLDPSPQSVRSDLSTSPRASSPDRNSPMS). Disordered stretches follow at residues 50-93 (NNST…KART) and 206-233 (FQAT…SNSD). The homeobox DNA-binding region spans 88–147 (SRKARTIFTDKQLQELENTFEKQKYLSVQDRMDLAHRMGLSDTQVKTWYQNRRTKWKRQA). Over residues 224-233 (PQLDVSSNSD) the composition is skewed to polar residues.

It is found in the nucleus. Cell-type specific anti-apoptotic transcription factor required for the sexually dimorphic survival of the male-specific CEM (cephalic male) sensory neurons during sex determination. In hermaphrodites, the homologous cells undergo programmed cell death due to transcriptional repression of ceh-30 by tra-1, the terminal regulator in the sex determination pathway. The sequence is that of Homeobox protein ceh-30 from Caenorhabditis briggsae.